Here is a 67-residue protein sequence, read N- to C-terminus: Conotoxin LiC33 (67 aa).

Residues 1 to 22 (MRCVPVFIILLLLSPSAPSVDA) form the signal peptide. Positions 23-48 (HPKTKDDVPLASFHDDAKRTLQRLWI) are excised as a propeptide. Phe-63 carries the post-translational modification Phenylalanine amide. Positions 65-67 (KGK) are excised as a propeptide.

This sequence belongs to the conotoxin T superfamily. In terms of processing, contains 2 disulfide bonds that can be either 'C1-C3, C2-C4' or 'C1-C4, C2-C3', since these disulfide connectivities have been observed for conotoxins with cysteine framework V (for examples, see AC P0DQQ7 and AC P81755). Expressed by the venom duct.

It is found in the secreted. The chain is Conotoxin LiC33 from Conus lividus (Livid cone).